Here is a 200-residue protein sequence, read N- to C-terminus: uncharacterized protein (200 aa).

The region spanning 1 to 191 is the AMMECR1 domain; it reads MTSANIQMAV…LDYKDYVNYK (191 aa).

This is an uncharacterized protein from Caenorhabditis elegans.